Consider the following 208-residue polypeptide: Protein TIC 20-II, chloroplastic (208 aa).

The N-terminal 49 residues, 1 to 49, are a transit peptide targeting the chloroplast; sequence MASLCLSLHQTLTNPLSAPRCRPLSLSFPGSSTFSIRPSSRRATALTTR. The next 4 membrane-spanning stretches (helical) occupy residues 61–83, 101–121, 134–154, and 172–192; these read VISI…FLFA, LYRS…LGVV, AMQA…TRIL, and TGVF…SLLG.

The protein belongs to the Tic20 family. As to quaternary structure, part of the Tic complex. Expressed in leaves, siliques and roots.

Its subcellular location is the plastid. The protein resides in the chloroplast inner membrane. Functionally, may be involved in protein precursor import into chloroplasts. Not redundant with TIC20-I, TIC20-IV or TIC20-V. This is Protein TIC 20-II, chloroplastic (TIC20-II) from Arabidopsis thaliana (Mouse-ear cress).